The sequence spans 550 residues: Chaperonin GroEL (550 aa).

Residues 29–32 (TLGP), Lys-50, 86–90 (DGTTT), Gly-414, and Asp-495 contribute to the ATP site.

It belongs to the chaperonin (HSP60) family. As to quaternary structure, forms a cylinder of 14 subunits composed of two heptameric rings stacked back-to-back. Interacts with the co-chaperonin GroES.

The protein localises to the cytoplasm. The enzyme catalyses ATP + H2O + a folded polypeptide = ADP + phosphate + an unfolded polypeptide.. Its function is as follows. Together with its co-chaperonin GroES, plays an essential role in assisting protein folding. The GroEL-GroES system forms a nano-cage that allows encapsulation of the non-native substrate proteins and provides a physical environment optimized to promote and accelerate protein folding. The protein is Chaperonin GroEL of Parvibaculum lavamentivorans (strain DS-1 / DSM 13023 / NCIMB 13966).